Here is a 113-residue protein sequence, read N- to C-terminus: Ig heavy chain V-III region ABE-47N (113 aa).

The 113-residue stretch at 1-113 (EVKLEESGGG…YWGQGTLVTV (113 aa)) folds into the Ig-like domain. C22 and C98 are joined by a disulfide.

In Mus musculus (Mouse), this protein is Ig heavy chain V-III region ABE-47N.